We begin with the raw amino-acid sequence, 290 residues long: Undecaprenyl-diphosphatase (290 aa).

The next 6 helical transmembrane spans lie at 39 to 59 (PGAA…LIYF), 85 to 105 (AQMG…GITL), 118 to 138 (LIAT…RLAA), 202 to 222 (SFLL…KDVG), 230 to 250 (PTIF…AWFM), and 261 to 281 (FVIY…AGVL).

The protein belongs to the UppP family.

Its subcellular location is the cell membrane. It catalyses the reaction di-trans,octa-cis-undecaprenyl diphosphate + H2O = di-trans,octa-cis-undecaprenyl phosphate + phosphate + H(+). Catalyzes the dephosphorylation of undecaprenyl diphosphate (UPP). Confers resistance to bacitracin. The chain is Undecaprenyl-diphosphatase from Streptomyces griseus subsp. griseus (strain JCM 4626 / CBS 651.72 / NBRC 13350 / KCC S-0626 / ISP 5235).